A 3411-amino-acid chain; its full sequence is Genome polyprotein (3411 aa).

Residues Met1–Asp104 lie on the Cytoplasmic side of the membrane. The segment at Pro38–Leu72 is hydrophobic; homodimerization of capsid protein C. Positions Ser102–Gly121 are cleaved as a propeptide — ER anchor for the capsid protein C, removed in mature form by serine protease NS3. The chain crosses the membrane as a helical span at residues Val105–Val125. Topologically, residues Arg126 to Arg244 are extracellular. N-linked (GlcNAc...) asparagine; by host glycosylation is found at Asn134 and Asn150. Residues Trp245–Ser265 traverse the membrane as a helical segment. Over Asn266–Arg270 the chain is Cytoplasmic. The helical transmembrane segment at Val271–Ser285 threads the bilayer. At Ala286–Leu730 the chain is on the extracellular side. 8 disulfide bridges follow: Cys288/Cys315, Cys345/Cys401, Cys345/Cys406, Cys359/Cys390, Cys377/Cys401, Cys377/Cys406, Cys467/Cys568, and Cys585/Cys615. Residues Asp383 to Gly396 form a fusion peptide region. A helical membrane pass occupies residues Phe731–Ile751. Residues Asn752–Thr757 are Extracellular-facing. A helical transmembrane segment spans residues Met758–Ala778. Over Asp779–Glu1132 the chain is Extracellular. 6 disulfide bridges follow: Cys782–Cys793, Cys833–Cys921, Cys957–Cys1002, Cys1058–Cys1107, Cys1069–Cys1091, and Cys1090–Cys1094. N-linked (GlcNAc...) asparagine; by host glycosylation is found at Asn908 and Asn986. A helical transmembrane segment spans residues Ile1133–Lys1153. The Cytoplasmic portion of the chain corresponds to Arg1154 to Ala1201. Residues Met1202–Leu1222 traverse the membrane as a helical segment. The Lumenal portion of the chain corresponds to Arg1223–Pro1287. A helical transmembrane segment spans residues Val1288–Val1308. Over Leu1309 to Ser1355 the chain is Cytoplasmic. The chain crosses the membrane as a helical span at residues Ile1356 to Phe1376. The Lumenal portion of the chain corresponds to Gln1377–Glu1378. The chain crosses the membrane as a helical span at residues Met1379–Ala1399. Over Gly1400–Leu1456 the chain is Cytoplasmic. The interacts with and activates NS3 protease stretch occupies residues Leu1407–Val1446. The segment at residues Ala1457–Phe1477 is an intramembrane region (helical). Residues His1478–Ala2157 lie on the Cytoplasmic side of the membrane. A Peptidase S7 domain is found at Ser1485–Leu1665. Active-site charge relay system; for serine protease NS3 activity residues include His1537, Asp1561, and Ser1622. A Helicase ATP-binding domain is found at Pro1669–Gln1825. Residues Lys1673–Met1676 are important for RNA-binding. ATP is bound at residue Phe1682–Thr1689. Residues Asp1773–His1776 carry the DEAH box motif. The Helicase C-terminal domain maps to Glu1820 to Tyr1997. Lys1877 carries the post-translational modification N6-acetyllysine; by host. Residues Met2158 to Phe2178 traverse the membrane as a helical segment. Topologically, residues Met2179–Arg2186 are lumenal. The helical intramembrane region spans Met2187–Lys2207. Topologically, residues Pro2208 to Thr2209 are lumenal. A helical transmembrane segment spans residues His2210–Gly2230. The Cytoplasmic segment spans residues Gln2231–Ala2241. A helical membrane pass occupies residues Tyr2242 to Leu2262. The Lumenal segment spans residues Glu2263–Gly2293. An intramembrane region (helical) is located at residues Ala2294 to Ile2314. Residues Lys2315–Ile2360 are Lumenal-facing. A helical transmembrane segment spans residues Thr2361–Pro2381. Residues Gly2382–Ala2421 lie on the Cytoplasmic side of the membrane. Residues Leu2422–Met2442 form a helical membrane-spanning segment. At Cys2443–Thr2445 the chain is on the lumenal side. The chain crosses the membrane as a helical span at residues Pro2446 to Gly2466. Residues Asn2467–Ile3411 lie on the Cytoplasmic side of the membrane. Residues Gly2507–Ser2771 enclose the mRNA cap 0-1 NS5-type MT domain. Residue Ser2562 coordinates S-adenosyl-L-methionine. Phosphoserine is present on Ser2562. Catalysis depends on Lys2567, which acts as the For 2'-O-MTase activity. Residues Gly2592, Trp2593, Thr2610, Leu2611, Asp2637, and Ile2638 each contribute to the S-adenosyl-L-methionine site. The active-site For 2'-O-MTase activity is Asp2652. An S-adenosyl-L-methionine-binding site is contributed by Ile2653. Active-site for 2'-O-MTase activity residues include Lys2688 and Glu2724. Residue Tyr2726 coordinates S-adenosyl-L-methionine. The Nuclear localization signal signature appears at Arg2878–Arg2911. Zn(2+)-binding residues include Glu2945, His2949, Cys2954, and Cys2957. A RdRp catalytic domain is found at Gly3035–Ala3187. Positions 3222, 3238, and 3357 each coordinate Zn(2+).

This sequence in the N-terminal section; belongs to the class I-like SAM-binding methyltransferase superfamily. mRNA cap 0-1 NS5-type methyltransferase family. In terms of assembly, homodimer. Interacts (via N-terminus) with host EXOC1 (via C-terminus); this interaction results in EXOC1 degradation through the proteasome degradation pathway. As to quaternary structure, forms heterodimers with envelope protein E in the endoplasmic reticulum and Golgi. Homodimer; in the endoplasmic reticulum and Golgi. Interacts with protein prM. Interacts with non-structural protein 1. In terms of assembly, homodimer; Homohexamer when secreted. Interacts with envelope protein E. As to quaternary structure, interacts (via N-terminus) with serine protease NS3. Forms a heterodimer with serine protease NS3. May form homooligomers. In terms of assembly, forms a heterodimer with NS2B. Interacts with non-structural protein 2A (via N-terminus). Interacts with NS4B. Interacts with unphosphorylated RNA-directed RNA polymerase NS5; this interaction stimulates RNA-directed RNA polymerase NS5 guanylyltransferase activity. NS3 interacts with host PDCD6IP; this interaction contributes to virion release. As to quaternary structure, interacts with serine protease NS3. Homodimer. Interacts with host STAT2; this interaction prevents the establishment of cellular antiviral state. Interacts with serine protease NS3. Interacts with host TRIM23; this interaction leads to NS5 ubiquitination. Post-translationally, specific enzymatic cleavages in vivo yield mature proteins. The nascent capsid protein C contains a C-terminal hydrophobic domain that act as a signal sequence for translocation of prM into the lumen of the ER. Mature capsid protein C is cleaved at a site upstream of this hydrophobic domain by NS3. prM is cleaved in post-Golgi vesicles by a host furin, releasing the mature small envelope protein M, and peptide pr. Non-structural protein 2A-alpha, a C-terminally truncated form of non-structural protein 2A, results from partial cleavage by NS3. Specific enzymatic cleavages in vivo yield mature proteins peptide 2K acts as a signal sequence and is removed from the N-terminus of NS4B by the host signal peptidase in the ER lumen. Signal cleavage at the 2K-4B site requires a prior NS3 protease-mediated cleavage at the 4A-2K site. Cleaved in post-Golgi vesicles by a host furin, releasing the mature small envelope protein M, and peptide pr. This cleavage is incomplete as up to 30% of viral particles still carry uncleaved prM. In terms of processing, N-glycosylated. Post-translationally, N-glycosylated. The excreted form is glycosylated and this is required for efficient secretion of the protein from infected cells. Polyubiquitinated; ubiquitination is probably mediated by host TRIM23 and is prerequisite for NS5-STAT2 interaction. NS5 is not ISGylated or sumoylated. In terms of processing, acetylated by host KAT5. Acetylation modulates NS3 RNA-binding and unwinding activities and plays an important positive role for viral replication. Post-translationally, phosphorylated on serines residues. This phosphorylation may trigger NS5 nuclear localization.

Its subcellular location is the virion. It localises to the host nucleus. The protein resides in the host cytoplasm. It is found in the host perinuclear region. The protein localises to the secreted. Its subcellular location is the virion membrane. It localises to the host endoplasmic reticulum membrane. It catalyses the reaction Selective hydrolysis of -Xaa-Xaa-|-Yaa- bonds in which each of the Xaa can be either Arg or Lys and Yaa can be either Ser or Ala.. It carries out the reaction RNA(n) + a ribonucleoside 5'-triphosphate = RNA(n+1) + diphosphate. The catalysed reaction is a ribonucleoside 5'-triphosphate + H2O = a ribonucleoside 5'-diphosphate + phosphate + H(+). The enzyme catalyses ATP + H2O = ADP + phosphate + H(+). It catalyses the reaction a 5'-end (5'-triphosphoguanosine)-ribonucleoside in mRNA + S-adenosyl-L-methionine = a 5'-end (N(7)-methyl 5'-triphosphoguanosine)-ribonucleoside in mRNA + S-adenosyl-L-homocysteine. It carries out the reaction a 5'-end (N(7)-methyl 5'-triphosphoguanosine)-ribonucleoside in mRNA + S-adenosyl-L-methionine = a 5'-end (N(7)-methyl 5'-triphosphoguanosine)-(2'-O-methyl-ribonucleoside) in mRNA + S-adenosyl-L-homocysteine + H(+). Functionally, plays a role in virus budding by binding to the cell membrane and gathering the viral RNA into a nucleocapsid that forms the core of a mature virus particle. During virus entry, may induce genome penetration into the host cytoplasm after hemifusion induced by the surface proteins. Can migrate to the cell nucleus where it modulates host functions. In terms of biological role, inhibits RNA silencing by interfering with host Dicer. Prevents premature fusion activity of envelope proteins in trans-Golgi by binding to envelope protein E at pH6.0. After virion release in extracellular space, gets dissociated from E dimers. Its function is as follows. Acts as a chaperone for envelope protein E during intracellular virion assembly by masking and inactivating envelope protein E fusion peptide. prM is the only viral peptide matured by host furin in the trans-Golgi network probably to avoid catastrophic activation of the viral fusion activity in acidic Golgi compartment prior to virion release. prM-E cleavage is inefficient, and many virions are only partially matured. These uncleaved prM would play a role in immune evasion. Functionally, may play a role in virus budding. Exerts cytotoxic effects by activating a mitochondrial apoptotic pathway through M ectodomain. May display a viroporin activity. In terms of biological role, binds to host cell surface receptor and mediates fusion between viral and cellular membranes. Envelope protein is synthesized in the endoplasmic reticulum in the form of heterodimer with protein prM. They play a role in virion budding in the ER, and the newly formed immature particle is covered with 60 spikes composed of heterodimer between precursor prM and envelope protein E. The virion is transported to the Golgi apparatus where the low pH causes dissociation of PrM-E heterodimers and formation of E homodimers. prM-E cleavage is inefficient, and many virions are only partially matured. These uncleaved prM would play a role in immune evasion. Involved in immune evasion, pathogenesis and viral replication. Once cleaved off the polyprotein, is targeted to three destinations: the viral replication cycle, the plasma membrane and the extracellular compartment. Essential for viral replication. Required for formation of the replication complex and recruitment of other non-structural proteins to the ER-derived membrane structures. Excreted as a hexameric lipoparticle that plays a role against host immune response. Antagonizing the complement function. Binds to the host macrophages and dendritic cells. Inhibits signal transduction originating from Toll-like receptor 3 (TLR3). Its function is as follows. Component of the viral RNA replication complex that functions in virion assembly and antagonizes the host immune response. Functionally, required cofactor for the serine protease function of NS3. May have membrane-destabilizing activity and form viroporins. In terms of biological role, displays three enzymatic activities: serine protease, NTPase and RNA helicase. NS3 serine protease, in association with NS2B, performs its autocleavage and cleaves the polyprotein at dibasic sites in the cytoplasm: C-prM, NS2A-NS2B, NS2B-NS3, NS3-NS4A, NS4A-2K and NS4B-NS5. NS3 RNA helicase binds RNA and unwinds dsRNA in the 3' to 5' direction. Also plays a role in virus assembly. Regulates the ATPase activity of the NS3 helicase activity. NS4A allows NS3 helicase to conserve energy during unwinding. Its function is as follows. Functions as a signal peptide for NS4B and is required for the interferon antagonism activity of the latter. Functionally, induces the formation of ER-derived membrane vesicles where the viral replication takes place. Inhibits interferon (IFN)-induced host STAT1 phosphorylation and nuclear translocation, thereby preventing the establishment of cellular antiviral state by blocking the IFN-alpha/beta pathway. In terms of biological role, replicates the viral (+) and (-) RNA genome, and performs the capping of genomes in the cytoplasm. NS5 methylates viral RNA cap at guanine N-7 and ribose 2'-O positions. Besides its role in RNA genome replication, also prevents the establishment of cellular antiviral state by blocking the interferon-alpha/beta (IFN-alpha/beta) signaling pathway. IFN-I induces binding of NS5 to host IFN-activated transcription factor STAT2, preventing its transcriptional activity. Host TRIM23 is the E3 ligase that interacts with and polyubiquitinates NS5 to promote its binding to STAT2 and trigger IFN-I signaling inhibition. The polypeptide is Genome polyprotein (Aedes aegypti (Yellowfever mosquito)).